The chain runs to 943 residues: Translation initiation factor IF-2 (943 aa).

The tract at residues 46–359 (IKGMLSKQSA…MPQRKERPLP (314 aa)) is disordered. Low complexity predominate over residues 57-76 (KAPSSQAAKTPAKAAKTSSA). Basic and acidic residues-rich tracts occupy residues 92-103 (SNDHADVAEHSQ) and 110-124 (AKQE…KTSD). A compositionally biased stretch (polar residues) spans 130 to 141 (SKSTILRPRSTQ). Over residues 142-190 (TAHTNTNHNRGGNTASANNTANGRNSNRSNNNNNNRSANNANRSGNNNR) the composition is skewed to low complexity. Composition is skewed to basic and acidic residues over residues 191-205 (SNER…RFDN), 239-250 (ASERQQPKRQEA), and 259-271 (KRSE…RPRT). Composition is skewed to low complexity over residues 289-299 (PAAAAPKPASA) and 315-330 (NFGR…GFNR). The span at 331-342 (NNRRNKKNKRRQ) shows a compositional bias: basic residues. The span at 346–358 (PKKEMPQRKERPL) shows a compositional bias: basic and acidic residues. The tr-type G domain occupies 444 to 613 (PRPPVVTIMG…LLEADVLELK (170 aa)). Positions 453–460 (GHVDHGKT) are G1. 453-460 (GHVDHGKT) contributes to the GTP binding site. The tract at residues 478 to 482 (GITQH) is G2. A G3 region spans residues 499-502 (DTPG). GTP-binding positions include 499–503 (DTPGH) and 553–556 (NKID). Residues 553 to 556 (NKID) form a G4 region. The segment at 589 to 591 (SAK) is G5.

It belongs to the TRAFAC class translation factor GTPase superfamily. Classic translation factor GTPase family. IF-2 subfamily.

The protein resides in the cytoplasm. In terms of biological role, one of the essential components for the initiation of protein synthesis. Protects formylmethionyl-tRNA from spontaneous hydrolysis and promotes its binding to the 30S ribosomal subunits. Also involved in the hydrolysis of GTP during the formation of the 70S ribosomal complex. The chain is Translation initiation factor IF-2 from Lacticaseibacillus casei (strain BL23) (Lactobacillus casei).